A 115-amino-acid polypeptide reads, in one-letter code: Delta-hexatoxin-Hi1a (115 aa).

The N-terminal stretch at 1–18 (MKVIATLYGLLFLTVVLG) is a signal peptide. A propeptide spanning residues 19–73 (DITEGNENDLVENFREELSEADIPLLKKLEAIEDALLEKDFLPYEEEDRNARPKR) is cleaved from the precursor. Cystine bridges form between Cys-74–Cys-88, Cys-81–Cys-93, Cys-87–Cys-104, and Cys-89–Cys-115.

The protein belongs to the neurotoxin 06 (delta-actx) family. As to expression, expressed by the venom gland.

It is found in the secreted. In terms of biological role, neurotoxin that slows inactivation of voltage-gated sodium channels (Nav). In vivo, is lethal to both vertebrates and insects. This chain is Delta-hexatoxin-Hi1a, found in Hadronyche infensa (Fraser island funnel-web spider).